We begin with the raw amino-acid sequence, 290 residues long: Nitrogenase iron protein 2 (290 aa).

ATP is bound at residue 10 to 17; that stretch reads GKGGIGKS. Cysteine 98 contacts [4Fe-4S] cluster. Arginine 101 bears the ADP-ribosylarginine; by dinitrogenase reductase ADP-ribosyltransferase mark. Cysteine 133 provides a ligand contact to [4Fe-4S] cluster.

Belongs to the NifH/BchL/ChlL family. Homodimer. Requires [4Fe-4S] cluster as cofactor. In terms of processing, the reversible ADP-ribosylation of Arg-101 inactivates the nitrogenase reductase and regulates nitrogenase activity.

It carries out the reaction N2 + 8 reduced [2Fe-2S]-[ferredoxin] + 16 ATP + 16 H2O = H2 + 8 oxidized [2Fe-2S]-[ferredoxin] + 2 NH4(+) + 16 ADP + 16 phosphate + 6 H(+). Its function is as follows. The key enzymatic reactions in nitrogen fixation are catalyzed by the nitrogenase complex, which has 2 components: the iron protein (component 2) and a component 1 which is either a molybdenum-iron protein, a vanadium-iron, or an iron-iron protein. This Azotobacter vinelandii protein is Nitrogenase iron protein 2 (vnfH).